The chain runs to 84 residues: Hepcidin (84 aa).

Positions 1 to 24 (MALSSQIWAACLLLLLLLASLTSG) are cleaved as a signal peptide. A propeptide spanning residues 25 to 54 (SVFPQQTGQLAELQPQDRAGARASWMPMFQ) is cleaved from the precursor. Intrachain disulfides connect C66–C82, C69–C72, C70–C78, and C73–C81.

Belongs to the hepcidin family. As to quaternary structure, interacts with SLC40A1; this interaction promotes SLC40A1 rapid ubiquitination. Highest expression in liver and to a lesser extent in heart and brain. Low levels in lung, tonsils, salivary gland, trachea, prostate gland, adrenal gland and thyroid gland. Secreted into the urine and blood. Expressed by hepatocytes.

It is found in the secreted. Liver-produced hormone that constitutes the main circulating regulator of iron absorption and distribution across tissues. Acts by promoting endocytosis and degradation of ferroportin/SLC40A1, leading to the retention of iron in iron-exporting cells and decreased flow of iron into plasma. Controls the major flows of iron into plasma: absorption of dietary iron in the intestine, recycling of iron by macrophages, which phagocytose old erythrocytes and other cells, and mobilization of stored iron from hepatocytes. In terms of biological role, has strong antimicrobial activity against E.coli ML35P N.cinerea and weaker against S.epidermidis, S.aureus and group b streptococcus bacteria. Active against the fungus C.albicans. No activity against P.aeruginosa. This is Hepcidin from Homo sapiens (Human).